We begin with the raw amino-acid sequence, 710 residues long: uncharacterized protein (710 aa).

Coiled-coil stretches lie at residues 273 to 298 (LYRQ…MEEG) and 477 to 528 (RYEK…VADT).

This is an uncharacterized protein from Coxiella burnetii (strain RSA 493 / Nine Mile phase I).